The following is a 605-amino-acid chain: Kelch-like protein 41b (605 aa).

The BTB domain maps to 32–102 (VDCTLKIGDR…YSAEIDLVDD (71 aa)). A BACK domain is found at 136-238 (CLAVFRLGLV…PEKYFREKVE (103 aa)). Kelch repeat units lie at residues 345 to 397 (QLFI…ESEN), 398 to 446 (LLFA…SHNN), 447 to 494 (LVYC…VHKG), 496 to 541 (IIVT…SSGG), and 543 to 598 (LFSI…MRLN).

Its subcellular location is the cytoplasm. It is found in the cytoskeleton. The protein resides in the sarcoplasmic reticulum membrane. It localises to the endoplasmic reticulum membrane. Its function is as follows. Involved in skeletal muscle development and maintenance. In Danio rerio (Zebrafish), this protein is Kelch-like protein 41b.